Consider the following 144-residue polypeptide: Large ribosomal subunit protein uL15 (144 aa).

A disordered region spans residues Met-1–Arg-48.

This sequence belongs to the universal ribosomal protein uL15 family. As to quaternary structure, part of the 50S ribosomal subunit.

Binds to the 23S rRNA. This chain is Large ribosomal subunit protein uL15, found in Chlamydia caviae (strain ATCC VR-813 / DSM 19441 / 03DC25 / GPIC) (Chlamydophila caviae).